The primary structure comprises 1408 residues: DNA-directed RNA polymerase subunit beta'' (1408 aa).

Belongs to the RNA polymerase beta' chain family. RpoC2 subfamily. As to quaternary structure, in plastids the minimal PEP RNA polymerase catalytic core is composed of four subunits: alpha, beta, beta', and beta''. When a (nuclear-encoded) sigma factor is associated with the core the holoenzyme is formed, which can initiate transcription.

The protein localises to the plastid. It localises to the chloroplast. The enzyme catalyses RNA(n) + a ribonucleoside 5'-triphosphate = RNA(n+1) + diphosphate. In terms of biological role, DNA-dependent RNA polymerase catalyzes the transcription of DNA into RNA using the four ribonucleoside triphosphates as substrates. The sequence is that of DNA-directed RNA polymerase subunit beta'' from Psilotum nudum (Whisk fern).